The primary structure comprises 156 residues: 6,7-dimethyl-8-ribityllumazine synthase (156 aa).

5-amino-6-(D-ribitylamino)uracil is bound by residues phenylalanine 22, 57–59, and 81–83; these read AVE and SVI. 86–87 is a binding site for (2S)-2-hydroxy-3-oxobutyl phosphate; the sequence is GT. The active-site Proton donor is the histidine 89. Residue phenylalanine 114 participates in 5-amino-6-(D-ribitylamino)uracil binding. Arginine 128 is a (2S)-2-hydroxy-3-oxobutyl phosphate binding site.

This sequence belongs to the DMRL synthase family. In terms of assembly, forms an icosahedral capsid composed of 60 subunits, arranged as a dodecamer of pentamers.

It catalyses the reaction (2S)-2-hydroxy-3-oxobutyl phosphate + 5-amino-6-(D-ribitylamino)uracil = 6,7-dimethyl-8-(1-D-ribityl)lumazine + phosphate + 2 H2O + H(+). It participates in cofactor biosynthesis; riboflavin biosynthesis; riboflavin from 2-hydroxy-3-oxobutyl phosphate and 5-amino-6-(D-ribitylamino)uracil: step 1/2. Catalyzes the formation of 6,7-dimethyl-8-ribityllumazine by condensation of 5-amino-6-(D-ribitylamino)uracil with 3,4-dihydroxy-2-butanone 4-phosphate. This is the penultimate step in the biosynthesis of riboflavin. This Vibrio vulnificus (strain CMCP6) protein is 6,7-dimethyl-8-ribityllumazine synthase.